Reading from the N-terminus, the 101-residue chain is MAKISAVERNKKRERLTKRDAGKRAELKALIKDRALEPEDRFQAVLKLAQLPRNGSKTRVHNRCELTGRPHSVYRKFKLGRIMLRDLASQGQIPGMVKSSW.

Residues 1 to 20 (MAKISAVERNKKRERLTKRD) are disordered.

This sequence belongs to the universal ribosomal protein uS14 family. In terms of assembly, part of the 30S ribosomal subunit. Contacts proteins S3 and S10.

Binds 16S rRNA, required for the assembly of 30S particles and may also be responsible for determining the conformation of the 16S rRNA at the A site. The chain is Small ribosomal subunit protein uS14 from Rhodospirillum rubrum (strain ATCC 11170 / ATH 1.1.1 / DSM 467 / LMG 4362 / NCIMB 8255 / S1).